A 3907-amino-acid chain; its full sequence is MKTPIAVVGTACRFPGDISSPSQLWELLSNPKDVLRDLNPKRLNLTGFNHHNAEHHGATNVPNKSYILDDDVYRFDAAFFNISAAEAEAMDPQQRLLLETTYEALESAGYTLKQMRGSSTSVFIGAMTSDYHDIQARDLDTISRWHATGTSPSILSNRISYFFDLKGPSMTVNTACSSSLVALHQAVQSLRNGDCTAAIVGGVNLLLDPEVYISHSNLHMLSPTSRCRMWDRDADGYARGEGCTSIMIKTLDQALKDGDDVECIIRETAVNSDGRSAGITMPSPEAQATLIRETYERSGLDPVRDRCQYFECHGTGTQAGDPVEAQAIQQTFYPKNAVFSPDDKLYVGSIKTLIGHLEGCAGLAGVMKAIMCLKNRTITPNMFFDNLNPNISPFYDHLRIPTNTVPWPPVAHGCPLRASVNSFGFGGTNAHAIIESYVPSQPKRQASYCKESNRQKYTNSGPFVFSAHTQESLYSNIERTARYVRSNEALDLGHLAWTLAKRTVLPFKVAITALSREELLGNIDKAIVEYKASKASAQGPSPWKHPPEPHRIMGIFTGQGAQWAGMGRELLLASTVFRKSIERCEHALATLHDGPSWSLQEELLADKPSSRLSNPAISQPVTTAIEIAAYDLLCTSGVNVDVVVGHSSGEIVAAYALSIISAEDAMKIAYYRGLHTKPARSGRMLAVSLSFHDARELCSWPSFSGRVVVAASNGPASTTLSGDYDAILEVKALLDRKKTFARTLQVDVAYHSHHMVPCSAAYLESLRACNIQVKSPRSGCTWISSVTGRNAILDGDIQSFSATYWVDNMVKPVLFSQALDKSLCGTQDLGVCIEFGPHPALRGPVLDTLKSKGTSSVHYTSLLRRGQNDLNAASSAVGYLWERMADRVDLASFLQGFRSQALQLIKGLPGYSWDHGRRYWRESRISRRYRLEGTQLHPLLGRRSADEFPNEFCWKNMLHLKEMPWAQGYKEEGRVVLSAAFYLCSLLSAASSAAVCQRLVVLELNNFVVMEPITLEEYGNGVEYITTIRFDNEDFRTISSTILHAEASCHACKSDESVLTKVCTARLTLHLGDARGPDCDCLPPRGQRNDLLAPVDVADLYDSFEQAGMSYTGPFRSITSIQRSLGEATASVAWAVDTTMPESVLNPAMVEASFQAIMCAFASPLTEELRTPFHAKEIRRVLVTPRLALGGVSCDIDAFVTGVDCGGVEGDVSLYKPDGNAMIQIEGLVMKSVPQPDTSSDRNLFSHVVWESDPFGYSLISYPTPNEDMGWKRAADIVALYHLRRTVEEIDPLESAGFTPHHQLLYREISHIAAAGRGSEYYITHPDCAQTSEEIILAMIDKYAGIVDLQSLHSFGKALPAILRGELDLHNTPNEPDTLEGFTHDAAMFSQLSKDICSIVRRIVHKHPHMNVLGLDPGPSVITHQILEALDDKHTSYCLGSADPVILNKTLARLSAQHRNLYSKVIDLTTVNAGEHGSDKYDMVIAANPLHGTDTSANLFEVCRAMLKPGGYLVFVRVTGRVSMSLLCTCGWLPQWWQGYDQDARSWTDMSTVRYDSHLRSKGFSGIDHIFHDSMNSNGDGLSVMVTQAVNDTVMMLREPMNSTGLAPLTETVVFVGGKTLSVARLLQSIRRIVAASGTATTVVEDIDRLEMNGLTKQHSIISLVELDEPFFSRGAFHERLLAFKELVARSKHVLWLTTRNMTSISVAIGRAMRSERGADISLQFLGLSTVANISPSAVVEVFLRLTWSFVPVLTDGEVLWTNEPELQWDGSTLRIPRLVWDHKRNKRYNYRHRQGRPEAGLPQTAVPLSPRVSTNSVAVQIKYSCLVCTDVYLWVGARIDGQGNVVGISDHVSFVIHARLDHVHNLSDEHDLSPDALRATASFTLAYLLIKSLSGPILLYEPDELLAAAVEQDREPEQTVYFVTSKYNDCSRGWITVHPHASRRMVERMLPRKVSAFVDLSSSDDHVVTTLRDIYSHARIQAVELYRRAFAASPGQLIADSYTQACTSLSILSHTALEVTSSTEASTNIASVAYPKVVNWTSPAPIASPGDMISATTMFSSSGTYFMIDMATPLGLSILKWMATNGARKFVLAGRNPRMHEAWLEEMSRLGATVKPLKMDVSNKESILSAFTQIKEALPPIVGVCYAPLALSDQGFEYTVEDAGGLAATAMINAAKYLDELFPTPTLDFFVILTSLVSVIGTPKQVAYHAPSLFMTDLIQRRRLRGLVGSVMALGMVVDAGYFSRQGKEVIQRMMHHGYAPLSESDLHHAFGEVVAAGVPEAEGNAEIFFGLQLIDSQIDQSRESTSVSNHLLSHFITSRSGTKEGQYAEQEDSPSLLVPDEQLQESGPGRNKYDDLLARLSGKVRSILRLGDQALDVHTPLLDLGCDSLLAVDIQAWVAKEFDIDITPMDALLDTVAGLCEKAVPKPNAPGFVVEKEEQLVKELDFIDVATTASRSEHSSSVQDIPLDSTSSESSCVLCPSDSGFEQVRNDLEPRFTRIEKMSPHQSQIWFAGHWMRDPTQYNVVISYNVEGRFPVDRFKEALEHAVSMHESLRTAFFSDPNNGDLLQGVLKVPPPFLEHVRTPSAASVSQEFDKLASYQWRLEDGEVMRVTVVSIGKDQHTVIFGYHHIVMDGASWSTFLHDLKCIYEQRPRREVAQYVDYSLMLNRDIHNGTFAKELEFWKSELLPPPEMMPVLPLAKEKTRIPTDNFKVHTSTRHISIEATERIKQASRSLRGTPFHFYLATLQVFLAGLLKIESLCIGMSDANRKHQQFTGTVGYFLNMLPLRFEVQQTDSFANVFQKTSSKVLTALLNSSIPSNLVVDALNIPRVSNVTPLFQVAINYRVGEITRMSVDDFALNYDRSVMGNAPYDISFHVTPCANGTSIVEVNCRDYLYSPKATERIIDEYVRLLEIMSSNPLISVQSSVATSAPINEDGLSVQRGPRISHGWPATLPERFQDMVDQYGDRIAITDQGRDFSYLQLQAQSTRIGEALLQKGVRSGDTVAVLCPPSMNSVASMLAILRISAVYVPLDLSLPAARHKAMILASPVRALVCVSSTVEKVLELGVSTILNLSEIPDIRAPSTRFTNSAKGDSLAILLYTSGSTGQPKGVCLPQSGFINYLAAKRKELGLDSSTVVLQQSSLGFDMGLAQTLNAIMNGGKLVIVPQELRGDSIEIARIIRDQKVTFTLATPSEYLVMLQHGREYLHNYAGWRHACLGGEPFTDQLKREFVRLGKNCPVVQDSYGVTEISACTTFETMTASQLEEARSVGRTIPNTSLYIVDADCNLVATGEPGEICISGAGVALGYLNEEQTRLKFVQDPFALPDDIARGWTRVYRTGDKAKLLDDGSLILLGRMDGNTEVKVRGLRIDLEDVASTMVNCHPDLLSSAIVCVKGQGVSETLVAFVAMMPGQTASDVELQHLACNLPLPQYMRPSTVICLDELPRNANGKIDRKRIDAMPWTAPTTLSQSSKRLTLGEGELKLLWQVLLPGKHIQPESDFFLLGGNSTLLVRLQGAIRTSIGVSLTLREMYGASTLAQMALKVDARKAESPSMTINWLAETAIPQHILDRASSTSNLNLPKHCQGSGCQILLTGSTSFLGRVLVQLLLQVPEVERVHCIAVEKEQEHVPPTSDKVSLYYGSLLDPNLGLSTAEWASLQDRVDVVIHNGSNGHCLNTYNSLKGPNLGSTHRLAEFALQSQVPLHYISSGRVILQSGQTALGPTSVSFHPPPLDGSDGLTATKWAGEVFLERLAEHTDISISIHRPCTPIGDQAPAQDALNSLLRYSVNLGATPRLTRMEGYLDFQKVEIIAEEIATLVTSRFTKRSNTSSFTTRGVSFFHHSSNIKVPVKSFKEYMEKVHGRPFQELNLREWSSLALEQGIEPLIPSFLEAVDDNEETLRYPYLGN.

Positions 2 to 436 (KTPIAVVGTA…GTNAHAIIES (435 aa)) constitute a Ketosynthase family 3 (KS3) domain. Residues cysteine 176, histidine 313, and histidine 356 each act as for beta-ketoacyl synthase activity in the active site. The interval 555-870 (IFTGQGAQWA…SLLRRGQNDL (316 aa)) is malonyl-CoA:ACP transacylase (MAT) domain. Positions 937 to 1074 (HPLLGRRSAD…ARLTLHLGDA (138 aa)) are N-terminal hotdog fold. The interval 937–1236 (HPLLGRRSAD…GLVMKSVPQP (300 aa)) is dehydratase (DH) domain. Residues 937 to 1239 (HPLLGRRSAD…MKSVPQPDTS (303 aa)) enclose the PKS/mFAS DH domain. The tract at residues 1092–1239 (LAPVDVADLY…MKSVPQPDTS (148 aa)) is C-terminal hotdog fold. Residues 1386–1573 (AAMFSQLSKD…FSGIDHIFHD (188 aa)) form a methyltransferase (MT) domain region. The ketoreductase (KR)domain stretch occupies residues 2064-2238 (GTYFMIDMAT…VGSVMALGMV (175 aa)). The segment at 2324 to 2352 (TKEGQYAEQEDSPSLLVPDEQLQESGPGR) is disordered. One can recognise a Carrier 1 domain in the interval 2356 to 2430 (DDLLARLSGK…LCEKAVPKPN (75 aa)). Serine 2390 carries the O-(pantetheine 4'-phosphoryl)serine modification. The condensation stretch occupies residues 2504-2926 (MSPHQSQIWF…SSNPLISVQS (423 aa)). An adenylation region spans residues 2959–3359 (FQDMVDQYGD…GSLILLGRMD (401 aa)). A Carrier 2 domain is found at 3474 to 3549 (KRLTLGEGEL…QMALKVDARK (76 aa)). Serine 3509 bears the O-(pantetheine 4'-phosphoryl)serine mark. Residues 3594-3813 (LTGSTSFLGR…DFQKVEIIAE (220 aa)) form a reductase (RED) domain region.

This sequence in the C-terminal section; belongs to the NRP synthetase family.

It carries out the reaction L-tryptophan + malonyl-CoA + acetyl-CoA = cyclo-acetoacetyl-L-tryptophan + CO2 + 2 CoA + H2O. Its pathway is secondary metabolite biosynthesis. Functionally, hybrid PKS-NRPS synthetase; part of the gene cluster that mediates the biosynthesis of the fungal neurotoxin cyclopiazonic acid (CPA), a nanomolar inhibitor of Ca(2+)-ATPase with a unique pentacyclic indole tetramic acid scaffold. The hybrid two module polyketide synthase-nonribosomal peptide synthetase (PKS-NRPS) cpaS incorporates acetyl-CoA, malonyl-CoA, and tryptophan (Trp) and utilizes a C-terminal redox-incompetent reductase domain to make and release the tryptophan tetramic acid, cyclo-acetoacetyl-L-tryptophan (c-AATrp), as the first intermediate in the pathway. CpaS catalyzes a Dieckmann-type cyclization on the N-acetoacetyl-Trp intermediate bound in thioester linkage to the phosphopantetheinyl arm of the T domain to form and release c-AATrp. CpaD then regiospecifically dimethylallylates c-AATrp to form beta-cyclopiazonic acid. CpaD discriminates against free Trp but accepts tryptophan-containing thiohydantoins, diketopiperazines, and linear peptides as substrates for C4-prenylation and also acts as regiospecific O-dimethylallyltransferase (DMAT) on a tyrosine-derived tetramic acid. The beta-cyclopiazonate dehydrogenase cpaO then carries out the dehydrogenation of beta-CPA to yield an unstable enimine product, which is captured by intramolecular cyclization to create the pentacyclic fused scaffold of alpha-cyclopiazonate. Finally, the cytochrome P450 monooxygenase cpaH mediates the conversion of CPA into the less toxic 2-oxocyclopiazonic acid, the end product of the CPA pathway in A.oryza. The polypeptide is Cyclo-acetoacetyl-L-tryptophan synthase (Aspergillus oryzae (Yellow koji mold)).